The chain runs to 535 residues: Beta-glucosidase 20 (535 aa).

The N-terminal stretch at 1–24 (MGRFHKFPLLGLVLFLGLTGSLIA) is a signal peptide. 2 residues coordinate a beta-D-glucoside: Q56 and H159. N187 carries N-linked (GlcNAc...) asparagine glycosylation. 204–205 (NE) is a binding site for a beta-D-glucoside. E205 serves as the catalytic Proton donor. C224 and C235 are disulfide-bonded. Residues Y351 and E424 each coordinate a beta-D-glucoside. The active-site Nucleophile is E424. An N-linked (GlcNAc...) asparagine glycan is attached at N468. A beta-D-glucoside is bound by residues W475, 482 to 483 (EW), and F491. N501 is a glycosylation site (N-linked (GlcNAc...) asparagine). A Prevents secretion from ER motif is present at residues 532-535 (HDEL).

Belongs to the glycosyl hydrolase 1 family.

It is found in the endoplasmic reticulum lumen. It catalyses the reaction Hydrolysis of terminal, non-reducing beta-D-glucosyl residues with release of beta-D-glucose.. The chain is Beta-glucosidase 20 from Arabidopsis thaliana (Mouse-ear cress).